The primary structure comprises 90 residues: Probable Fe(2+)-trafficking protein (90 aa).

This sequence belongs to the Fe(2+)-trafficking protein family. In terms of assembly, monomer.

Could be a mediator in iron transactions between iron acquisition and iron-requiring processes, such as synthesis and/or repair of Fe-S clusters in biosynthetic enzymes. The polypeptide is Probable Fe(2+)-trafficking protein (Hamiltonella defensa subsp. Acyrthosiphon pisum (strain 5AT)).